Reading from the N-terminus, the 86-residue chain is Toxin Tpa5 (86 aa).

Positions 1–20 (MSIFPIALALLLIGLEEGEA) are cleaved as a signal peptide. The LCN-type CS-alpha/beta domain occupies 22–85 (RDGYPISKNN…WGDPGTPPCM (64 aa)). 4 cysteine pairs are disulfide-bonded: cysteine 33–cysteine 84, cysteine 37–cysteine 58, cysteine 43–cysteine 64, and cysteine 47–cysteine 66.

This sequence belongs to the long (4 C-C) scorpion toxin superfamily. Sodium channel inhibitor family. Beta subfamily. Expressed by the venom gland.

Its subcellular location is the secreted. In terms of biological role, beta toxins bind voltage-independently at site-4 of sodium channels (Nav) and shift the voltage of activation toward more negative potentials thereby affecting sodium channel activation and promoting spontaneous and repetitive firing. The protein is Toxin Tpa5 of Tityus pachyurus (Colombian scorpion).